The chain runs to 795 residues: Nucleolar complex protein 3 homolog (795 aa).

Disordered stretches follow at residues methionine 1–methionine 88, arginine 124–lysine 144, and isoleucine 168–glutamate 190. Composition is skewed to basic and acidic residues over residues leucine 22 to alanine 39 and glutamine 46 to serine 58. Residues glutamate 74–methionine 88 are compositionally biased toward acidic residues. Residues glutamate 171–aspartate 181 show a composition bias toward acidic residues. Positions serine 447 to threonine 492 form a coiled coil.

Belongs to the CBF/MAK21 family.

The protein localises to the nucleus. The protein resides in the nucleolus. The protein is Nucleolar complex protein 3 homolog (noc3l) of Xenopus laevis (African clawed frog).